A 478-amino-acid polypeptide reads, in one-letter code: Abscisate beta-glucosyltransferase (478 aa).

Residue His-20 is the Proton acceptor of the active site. Residue His-20 participates in an anthocyanidin binding. Asp-108 (charge relay) is an active-site residue. UDP-alpha-D-glucose contacts are provided by Ala-340, Gln-342, His-357, Trp-360, Asn-361, Ser-362, and Glu-365. Ala-380 provides a ligand contact to an anthocyanidin. Glu-381 and Gln-382 together coordinate UDP-alpha-D-glucose.

It belongs to the UDP-glycosyltransferase family.

The catalysed reaction is 2-cis-(+)-abscisate + UDP-alpha-D-glucose = beta-D-glucopyranosyl cis-(+)-abscisate + UDP. In terms of biological role, glucosyltransferase involved in the catabolism of abscisic acid (ABA). Adds a glucosyl group at the C-1 position of ABA; (S)-2-trans-abscisate is a better substrate than the natural (+)-S-abscisate or its enantiomer (-)-R-abscisate. No activity with (-)-phaseic acid (PA), methylated-ABA or with other hormones such as jasmonate, zeatin, auxin (IAA) or gibberellin A3 (GA3). This chain is Abscisate beta-glucosyltransferase (AOG), found in Phaseolus angularis (Azuki bean).